The following is a 447-amino-acid chain: Tubulin beta chain (447 aa).

The GTP site is built by Q11, E69, S138, G142, T143, G144, N204, and N226. E69 contacts Mg(2+).

Belongs to the tubulin family. In terms of assembly, dimer of alpha and beta chains. A typical microtubule is a hollow water-filled tube with an outer diameter of 25 nm and an inner diameter of 15 nM. Alpha-beta heterodimers associate head-to-tail to form protofilaments running lengthwise along the microtubule wall with the beta-tubulin subunit facing the microtubule plus end conferring a structural polarity. Microtubules usually have 13 protofilaments but different protofilament numbers can be found in some organisms and specialized cells. The cofactor is Mg(2+).

The protein localises to the cytoplasm. It is found in the cytoskeleton. Functionally, tubulin is the major constituent of microtubules, a cylinder consisting of laterally associated linear protofilaments composed of alpha- and beta-tubulin heterodimers. Microtubules grow by the addition of GTP-tubulin dimers to the microtubule end, where a stabilizing cap forms. Below the cap, tubulin dimers are in GDP-bound state, owing to GTPase activity of alpha-tubulin. This Trichophyton rubrum (Athlete's foot fungus) protein is Tubulin beta chain.